The chain runs to 564 residues: Arginine--tRNA ligase (564 aa).

The 'HIGH' region motif lies at 122–132; sequence PNIAKPFSIGH.

This sequence belongs to the class-I aminoacyl-tRNA synthetase family. In terms of assembly, monomer.

The protein localises to the cytoplasm. It carries out the reaction tRNA(Arg) + L-arginine + ATP = L-arginyl-tRNA(Arg) + AMP + diphosphate. The sequence is that of Arginine--tRNA ligase from Lactococcus lactis subsp. cremoris (strain SK11).